The primary structure comprises 342 residues: Heat-inducible transcription repressor HrcA (342 aa).

The protein belongs to the HrcA family.

In terms of biological role, negative regulator of class I heat shock genes (grpE-dnaK-dnaJ and groELS operons). Prevents heat-shock induction of these operons. The polypeptide is Heat-inducible transcription repressor HrcA (Leptospira interrogans serogroup Icterohaemorrhagiae serovar copenhageni (strain Fiocruz L1-130)).